The primary structure comprises 872 residues: Rho guanine nucleotide exchange factor scd1 (872 aa).

Residues 1 to 29 (MAYFQDRKTSSRSLPSYINHSTQNLVGPR) form a disordered region. Polar residues predominate over residues 11 to 25 (SRSLPSYINHSTQNL). The region spanning 82-198 (DSIHREALNS…TIELLLKKYE (117 aa)) is the Calponin-homology (CH) domain. In terms of domain architecture, DH spans 228–402 (SGRRVTAELY…VRVANQVNET (175 aa)). Residues 426-547 (SLQYFGQLLV…WMSVLNRLLW (122 aa)) enclose the PH domain. Disordered regions lie at residues 553 to 667 (SPKD…STAS) and 743 to 765 (MKSDGSLLPSTKHTSLSSSSTST). A compositionally biased stretch (polar residues) spans 560–584 (AASTPANPVYNRSSSQTSKGYNSSD). Ser583 carries the phosphoserine modification. Residues 599 to 616 (SPTSISSPSSKSSPFTKT) are compositionally biased toward low complexity. Basic and acidic residues predominate over residues 617–633 (TSKDTKSATTTDERPSD). Composition is skewed to low complexity over residues 645–667 (TSSLRTSQTTSTIVSNDSSSTAS) and 748–765 (SLLPSTKHTSLSSSSTST). Positions 772–859 (TTNVKIRLRL…FELMDPVHNK (88 aa)) constitute a PB1 domain.

In terms of assembly, scd1, scd2, cdc42, and ras1, in its GTP-bound state, act cooperatively to form a protein complex. Interacts with moe1 and cdc42.

It localises to the nucleus. The protein localises to the cytoplasm. Required for mating and morphogenesis. May contain a cryptic binding site for cdc42 that is enhanced by binding Ras. Interacts directly with scd2. Promotes the exchange of cdc42-bound GDP by GTP. Involved in septation and stimulates the elongation of conjugation tubes. In Schizosaccharomyces pombe (strain 972 / ATCC 24843) (Fission yeast), this protein is Rho guanine nucleotide exchange factor scd1 (scd1).